Consider the following 404-residue polypeptide: Tryptophan synthase beta chain (404 aa).

Position 94 is an N6-(pyridoxal phosphate)lysine (K94).

The protein belongs to the TrpB family. In terms of assembly, tetramer of two alpha and two beta chains. It depends on pyridoxal 5'-phosphate as a cofactor.

It catalyses the reaction (1S,2R)-1-C-(indol-3-yl)glycerol 3-phosphate + L-serine = D-glyceraldehyde 3-phosphate + L-tryptophan + H2O. It functions in the pathway amino-acid biosynthesis; L-tryptophan biosynthesis; L-tryptophan from chorismate: step 5/5. Its function is as follows. The beta subunit is responsible for the synthesis of L-tryptophan from indole and L-serine. The sequence is that of Tryptophan synthase beta chain from Staphylococcus aureus (strain USA300).